Here is a 94-residue protein sequence, read N- to C-terminus: Phosphoribosyl-ATP pyrophosphatase (94 aa).

This sequence belongs to the PRA-PH family.

The protein localises to the cytoplasm. It carries out the reaction 1-(5-phospho-beta-D-ribosyl)-ATP + H2O = 1-(5-phospho-beta-D-ribosyl)-5'-AMP + diphosphate + H(+). Its pathway is amino-acid biosynthesis; L-histidine biosynthesis; L-histidine from 5-phospho-alpha-D-ribose 1-diphosphate: step 2/9. This is Phosphoribosyl-ATP pyrophosphatase (hisE) from Pyrobaculum aerophilum (strain ATCC 51768 / DSM 7523 / JCM 9630 / CIP 104966 / NBRC 100827 / IM2).